The sequence spans 199 residues: NAD(P)H dehydrogenase (quinone) (199 aa).

The region spanning 4-190 is the Flavodoxin-like domain; it reads VLVLYYSAYG…DGARYQGRKI (187 aa). FMN contacts are provided by residues 10–15 and 78–80; these read SAYGHI and TRF. Tyr-12 is an NAD(+) binding site. Trp-98 contributes to the substrate binding site. FMN-binding positions include 113-119 and His-134; that span reads STATQHG.

Belongs to the WrbA family. Requires FMN as cofactor.

It catalyses the reaction a quinone + NADH + H(+) = a quinol + NAD(+). The enzyme catalyses a quinone + NADPH + H(+) = a quinol + NADP(+). This Xanthobacter autotrophicus (strain ATCC BAA-1158 / Py2) protein is NAD(P)H dehydrogenase (quinone).